We begin with the raw amino-acid sequence, 186 residues long: Early nodulin-like protein 13 (186 aa).

The signal sequence occupies residues 1–23 (MAQRTLVATFFLIFFLLTNLVCS). Residues 24–128 (KEIIVGGKTS…GEKLHIVVMS (105 aa)) form the Phytocyanin domain. Cysteine 82 and cysteine 116 form a disulfide bridge. N-linked (GlcNAc...) asparagine glycosylation is found at asparagine 83 and asparagine 90. Alanine 165 carries the GPI-anchor amidated alanine lipid modification. A propeptide spans 166–186 (SSLTRQVGVLGFVGLLAIVLL) (removed in mature form).

It belongs to the early nodulin-like (ENODL) family. Mostly expressed in seedlings, siliques and flowers, and, to a lower extent, in roots, stems and seeds, but barely in leaves.

It localises to the cell membrane. Its function is as follows. May act as a carbohydrate transporter. Required, together with ENODL11, ENODL12, ENODL13, ENODL14 and ENODL15, for male-female communication and pollen tube reception and burst at the synergid cell surface of the female gametophyte. This chain is Early nodulin-like protein 13, found in Arabidopsis thaliana (Mouse-ear cress).